We begin with the raw amino-acid sequence, 255 residues long: tRNA (guanine-N(1)-)-methyltransferase (255 aa).

Residues glycine 112 and 131–136 (LGDYVL) each bind S-adenosyl-L-methionine.

Belongs to the RNA methyltransferase TrmD family. As to quaternary structure, homodimer.

It localises to the cytoplasm. It catalyses the reaction guanosine(37) in tRNA + S-adenosyl-L-methionine = N(1)-methylguanosine(37) in tRNA + S-adenosyl-L-homocysteine + H(+). Functionally, specifically methylates guanosine-37 in various tRNAs. This chain is tRNA (guanine-N(1)-)-methyltransferase, found in Lacticaseibacillus paracasei (strain ATCC 334 / BCRC 17002 / CCUG 31169 / CIP 107868 / KCTC 3260 / NRRL B-441) (Lactobacillus paracasei).